Reading from the N-terminus, the 33-residue chain is Suppressor protein HFN40 (33 aa).

Its function is as follows. Suppresses expansion of husk leaf blades. The protein is Suppressor protein HFN40 of Zea mays (Maize).